Consider the following 281-residue polypeptide: Apolipoprotein E (281 aa).

Positions 1-18 are cleaved as a signal peptide; sequence MKVLWAALLIALLAGCQG. 5 tandem repeats follow at residues 82–103, 104–125, 126–147, 148–169, and 198–219. The 5 X 22 AA approximate tandem repeats stretch occupies residues 82–219; that stretch reads ALMDETMKEL…RLDEVKEQVE (138 aa). Met145 carries the post-translational modification Methionine sulfoxide. Ser149 carries the phosphoserine modification. The LDL and other lipoprotein receptors binding stretch occupies residues 160–170; sequence HLRKLRTVSYT. Heparin contacts are provided by residues 164–167 and 193–200; these read LRTV and GERLRTRM. Residues 230 to 281 form a homooligomerization region; the sequence is QQMRLQAEAFQARLKSWFEPLVEDMQRQWAGLVEKVQAAVGASAAPVPSDNH. The tract at residues 242 to 254 is specificity for association with VLDL; it reads RLKSWFEPLVEDM.

It belongs to the apolipoprotein A1/A4/E family. In terms of assembly, homotetramer. May interact with ABCA1; functionally associated with ABCA1 in the biogenesis of HDLs. May interact with APP/A4 amyloid-beta peptide; the interaction is extremely stable in vitro but its physiological significance is unclear. May interact with MAPT. May interact with MAP2. In the cerebrospinal fluid, interacts with secreted SORL1. Interacts with PMEL; this allows the loading of PMEL luminal fragment on ILVs to induce fibril nucleation. Post-translationally, APOE exists as multiple glycosylated and sialylated glycoforms within cells and in plasma. The extent of glycosylation and sialylation are tissue and context specific. Glycated in plasma VLDL. In terms of processing, phosphorylated by FAM20C in the extracellular medium.

It localises to the secreted. The protein resides in the extracellular space. Its subcellular location is the extracellular matrix. The protein localises to the extracellular vesicle. It is found in the endosome. It localises to the multivesicular body. Its function is as follows. APOE is an apolipoprotein, a protein associating with lipid particles, that mainly functions in lipoprotein-mediated lipid transport between organs via the plasma and interstitial fluids. APOE is a core component of plasma lipoproteins and is involved in their production, conversion and clearance. Apolipoproteins are amphipathic molecules that interact both with lipids of the lipoprotein particle core and the aqueous environment of the plasma. As such, APOE associates with chylomicrons, chylomicron remnants, very low density lipoproteins (VLDL) and intermediate density lipoproteins (IDL) but shows a preferential binding to high-density lipoproteins (HDL). It also binds a wide range of cellular receptors including the LDL receptor/LDLR, the LDL receptor-related proteins LRP1, LRP2 and LRP8 and the very low-density lipoprotein receptor/VLDLR that mediate the cellular uptake of the APOE-containing lipoprotein particles. Finally, APOE also has a heparin-binding activity and binds heparan-sulfate proteoglycans on the surface of cells, a property that supports the capture and the receptor-mediated uptake of APOE-containing lipoproteins by cells. A main function of APOE is to mediate lipoprotein clearance through the uptake of chylomicrons, VLDLs, and HDLs by hepatocytes. APOE is also involved in the biosynthesis by the liver of VLDLs as well as their uptake by peripheral tissues ensuring the delivery of triglycerides and energy storage in muscle, heart and adipose tissues. By participating in the lipoprotein-mediated distribution of lipids among tissues, APOE plays a critical role in plasma and tissues lipid homeostasis. APOE is also involved in two steps of reverse cholesterol transport, the HDLs-mediated transport of cholesterol from peripheral tissues to the liver, and thereby plays an important role in cholesterol homeostasis. First, it is functionally associated with ABCA1 in the biogenesis of HDLs in tissues. Second, it is enriched in circulating HDLs and mediates their uptake by hepatocytes. APOE also plays an important role in lipid transport in the central nervous system, regulating neuron survival and sprouting. This Aotus nancymaae (Ma's night monkey) protein is Apolipoprotein E (APOE).